The following is a 513-amino-acid chain: DNA damage-binding protein CMR1 (513 aa).

Positions 35 to 45 (RSEAGIEDHRK) are enriched in basic and acidic residues. Positions 35-103 (RSEAGIEDHR…TAQNVKQEEE (69 aa)) are disordered. 6 WD repeats span residues 183–224 (IVHE…PDPE), 237–277 (LFSR…SDEL), 329–369 (LSDK…AKPD), 386–425 (NSRL…PSEL), 438–477 (GRWV…LSHL), and 478–513 (ETST…APQE).

This sequence belongs to the WD repeat DDB2/WDR76 family.

Its function is as follows. DNA-binding protein that binds to both single- and double-stranded DNA. Binds preferentially to UV-damaged DNA. May be involved in DNA-metabolic processes. This is DNA damage-binding protein CMR1 from Eremothecium gossypii (strain ATCC 10895 / CBS 109.51 / FGSC 9923 / NRRL Y-1056) (Yeast).